The following is a 239-amino-acid chain: DNA repair protein RecO (239 aa).

This sequence belongs to the RecO family.

In terms of biological role, involved in DNA repair and RecF pathway recombination. The protein is DNA repair protein RecO of Bifidobacterium longum subsp. infantis (strain ATCC 15697 / DSM 20088 / JCM 1222 / NCTC 11817 / S12).